A 201-amino-acid polypeptide reads, in one-letter code: MSGKSLLLKVILLGDGGVGKSSLMNRYVTNKFDSQAFHTIGVEFLNRDLEVDGRFVTLQIWDTAGQERFKSLRTPFYRGADCCLLTFSVDDRQSFENLGNWQKEFIYYADVKDPDHFPFVVLGNKVDKEDRQVTTEEAQAWCMENGNYPYLETSAKDDTNVTVAFEEAVRQVLAVEEQLEHCMLGHTIDLNSGSKASSSCC.

The GTP site is built by Val-18, Gly-19, Lys-20, Ser-21, Ser-22, Asp-33, Ser-34, Ala-36, His-38, and Thr-39. Ser-21 serves as a coordination point for Mg(2+). The Switch 1 signature appears at 31 to 42; that stretch reads KFDSQAFHTIGV. Phosphoserine is present on Ser-34. Residues Thr-39 and Asp-62 each contribute to the Mg(2+) site. The Switch 2 signature appears at 64-78; it reads AGQERFKSLRTPFYR. Residues Gly-65, Asn-124, Lys-125, Ala-155, and Lys-156 each contribute to the GTP site. Residues Cys-200 and Cys-201 are each lipidated (S-geranylgeranyl cysteine).

It belongs to the small GTPase superfamily. Rab family. Interacts (GTP-bound form) with SGSM1; the GDP-bound form has much lower affinity for SGSM1. The GTP-bound form but not the GDP-bound form interacts with HPS4 and the BLOC-3 complex (heterodimer of HPS1 and HPS4) but does not interact with HPS1 alone. Interacts (GTP-bound form) with NDE1. The cofactor is Mg(2+).

The protein localises to the cell membrane. Its subcellular location is the cytoplasmic vesicle. It localises to the phagosome membrane. The enzyme catalyses GTP + H2O = GDP + phosphate + H(+). With respect to regulation, regulated by guanine nucleotide exchange factors (GEFs) which promote the exchange of bound GDP for free GTP. Regulated by GTPase activating proteins (GAPs) which increase the GTP hydrolysis activity. Inhibited by GDP dissociation inhibitors (GDIs). Functionally, the small GTPases Rab are key regulators of intracellular membrane trafficking, from the formation of transport vesicles to their fusion with membranes. Rabs cycle between an inactive GDP-bound form and an active GTP-bound form that is able to recruit to membranes different sets of downstream effectors directly responsible for vesicle formation, movement, tethering and fusion. RAB9B is involved in the transport of proteins between the endosomes and the trans Golgi network. May use NDE1/NDEL1 as an effector to interact with the dynein motor complex in order to control retrograde trafficking of RAB9-associated late endosomes to the TGN. The polypeptide is Ras-related protein Rab-9B (Mus musculus (Mouse)).